Reading from the N-terminus, the 378-residue chain is tRNA-specific 2-thiouridylase MnmA (378 aa).

Residues 6-13 and L32 each bind ATP; that span reads AMSGGVDS. C101 serves as the catalytic Nucleophile. C101 and C199 are disulfide-bonded. ATP is bound at residue G125. The interaction with tRNA stretch occupies residues 148-150; that stretch reads KDQ. The active-site Cysteine persulfide intermediate is the C199.

This sequence belongs to the MnmA/TRMU family.

It localises to the cytoplasm. The enzyme catalyses S-sulfanyl-L-cysteinyl-[protein] + uridine(34) in tRNA + AH2 + ATP = 2-thiouridine(34) in tRNA + L-cysteinyl-[protein] + A + AMP + diphosphate + H(+). Its function is as follows. Catalyzes the 2-thiolation of uridine at the wobble position (U34) of tRNA, leading to the formation of s(2)U34. This Micrococcus luteus (strain ATCC 4698 / DSM 20030 / JCM 1464 / CCM 169 / CCUG 5858 / IAM 1056 / NBRC 3333 / NCIMB 9278 / NCTC 2665 / VKM Ac-2230) (Micrococcus lysodeikticus) protein is tRNA-specific 2-thiouridylase MnmA.